Here is a 307-residue protein sequence, read N- to C-terminus: Putative S-adenosyl-L-methionine-dependent methyltransferase MMAR_4570 (307 aa).

S-adenosyl-L-methionine-binding positions include Asp128 and 157–158 (DL).

This sequence belongs to the UPF0677 family.

Exhibits S-adenosyl-L-methionine-dependent methyltransferase activity. The sequence is that of Putative S-adenosyl-L-methionine-dependent methyltransferase MMAR_4570 from Mycobacterium marinum (strain ATCC BAA-535 / M).